Reading from the N-terminus, the 566-residue chain is APC membrane recruitment protein 2 (566 aa).

Disordered regions lie at residues 120–176 (KKNG…PGLI), 192–237 (TQKP…SPCS), 277–307 (VTGC…GKKV), and 342–533 (MIPP…RTKI). 3 stretches are compositionally biased toward basic and acidic residues: residues 123–134 (GKSENVRGEQAE), 155–168 (SKKD…KEGA), and 192–204 (TQKP…KSTE). 2 stretches are compositionally biased toward basic and acidic residues: residues 364–377 (REVK…DRNA) and 389–411 (YRKE…RNSD). Residues 464–476 (PPLSHSHSKPLSP) show a composition bias toward low complexity. Composition is skewed to polar residues over residues 477 to 489 (VTTS…ASSN) and 504 to 517 (HTTN…SGSA).

It belongs to the Amer family.

The protein resides in the cell membrane. Its function is as follows. Negative regulator of the canonical Wnt signaling pathway involved in neuroectodermal patterning. Acts by specifically binding phosphatidylinositol 4,5-bisphosphate (PtdIns(4,5)P2), translocating to the cell membrane and interacting with key regulators of the canonical Wnt signaling pathway, such as components of the beta-catenin destruction complex. The protein is APC membrane recruitment protein 2 (amer2) of Xenopus tropicalis (Western clawed frog).